The following is a 130-amino-acid chain: Small ribosomal subunit protein uS9 (130 aa).

The protein belongs to the universal ribosomal protein uS9 family.

This Xanthomonas campestris pv. campestris (strain 8004) protein is Small ribosomal subunit protein uS9.